Here is a 644-residue protein sequence, read N- to C-terminus: Chaperone protein HtpG (644 aa).

Residues M1 to R352 are a; substrate-binding. Residues E353–R566 form a b region. A c region spans residues L567 to L644.

The protein belongs to the heat shock protein 90 family. Homodimer.

The protein resides in the cytoplasm. Molecular chaperone. Has ATPase activity. The protein is Chaperone protein HtpG of Mycolicibacterium paratuberculosis (strain ATCC BAA-968 / K-10) (Mycobacterium paratuberculosis).